A 105-amino-acid chain; its full sequence is NADH-quinone oxidoreductase subunit K (105 aa).

A run of 3 helical transmembrane segments spans residues 7-27 (IGVN…MFAV), 34-54 (IVIL…FLTF), and 66-86 (FSLF…AIVI).

Belongs to the complex I subunit 4L family. In terms of assembly, NDH-1 is composed of 14 different subunits. Subunits NuoA, H, J, K, L, M, N constitute the membrane sector of the complex.

It localises to the cell inner membrane. The enzyme catalyses a quinone + NADH + 5 H(+)(in) = a quinol + NAD(+) + 4 H(+)(out). NDH-1 shuttles electrons from NADH, via FMN and iron-sulfur (Fe-S) centers, to quinones in the respiratory chain. The immediate electron acceptor for the enzyme in this species is believed to be a menaquinone. Couples the redox reaction to proton translocation (for every two electrons transferred, four hydrogen ions are translocated across the cytoplasmic membrane), and thus conserves the redox energy in a proton gradient. The sequence is that of NADH-quinone oxidoreductase subunit K from Chlorobaculum parvum (strain DSM 263 / NCIMB 8327) (Chlorobium vibrioforme subsp. thiosulfatophilum).